A 214-amino-acid chain; its full sequence is Calcineurin B homologous protein 3 (214 aa).

Glycine 2 carries the N-myristoyl glycine lipid modification. One can recognise an EF-hand domain in the interval 110–145; that stretch reads CRTDKLRFLFNMYDSDNDNKITLEEYRKVVEELLSG. Positions 123, 125, 127, 129, and 134 each coordinate Ca(2+).

The protein belongs to the calcineurin regulatory subunit family. CHP subfamily. As to quaternary structure, monomer. Homodimer.

It is found in the nucleus. The protein localises to the cytoplasm. The protein resides in the membrane. Its subcellular location is the cell membrane. It localises to the cell projection. It is found in the lamellipodium. The protein localises to the ruffle membrane. Functions as an integral cofactor in cell pH regulation by controlling plasma membrane-type Na(+)/H(+) exchange activity. Promotes the induction of hematopoietic stem cell differentiation toward megakaryocytic lineage. Essential for the coupling of ERK cascade activation with the expression of ETS family genes in megakaryocytic differentiation. Also involved in granulocytic differentiation in a ERK-dependent manner. Inhibits the phosphatase activity of calcineurin. The protein is Calcineurin B homologous protein 3 of Xenopus laevis (African clawed frog).